We begin with the raw amino-acid sequence, 520 residues long: Gamma aminobutyrate transaminase 3, chloroplastic (520 aa).

The transit peptide at Met-1–Arg-44 directs the protein to the chloroplast. Pyridoxal 5'-phosphate is bound at residue Gly-172–Ser-173. Residue Tyr-205 coordinates substrate. A pyridoxal 5'-phosphate-binding site is contributed by Asp-312. Residue Lys-341 participates in substrate binding. An N6-(pyridoxal phosphate)lysine modification is found at Lys-341.

It belongs to the class-III pyridoxal-phosphate-dependent aminotransferase family. As to expression, expressed in leaves, roots, stems, flowers and fruits.

The protein localises to the plastid. Its subcellular location is the chloroplast. The catalysed reaction is 4-aminobutanoate + pyruvate = succinate semialdehyde + L-alanine. It catalyses the reaction 4-aminobutanoate + glyoxylate = succinate semialdehyde + glycine. In terms of biological role, transaminase that degrades gamma-amino butyric acid (GABA) and uses pyruvate or glyoxylate as amino-group acceptor. Cannot use beta-alanine, ornithine, acetylornithine, serine, glycine, asparagine, glutamine, glutamate, valine, leucine, isoleucine, methionine, phenylalanine, histidine, lysine, arginine, aspartate, threonine, tyrosine, tryptophan, proline, or cysteine as amino donors. This is Gamma aminobutyrate transaminase 3, chloroplastic (GABA-TP3) from Solanum lycopersicum (Tomato).